Here is a 120-residue protein sequence, read N- to C-terminus: Putative gamma-glutamylcyclotransferase MJ1514 (120 aa).

7-10 (YGSL) is a binding site for substrate. The Proton acceptor role is filled by E74.

This sequence belongs to the gamma-glutamylcyclotransferase family.

Putative gamma-glutamylcyclotransferase. The chain is Putative gamma-glutamylcyclotransferase MJ1514 from Methanocaldococcus jannaschii (strain ATCC 43067 / DSM 2661 / JAL-1 / JCM 10045 / NBRC 100440) (Methanococcus jannaschii).